A 301-amino-acid chain; its full sequence is Haloalkane dehalogenase (301 aa).

D123 acts as the Nucleophile in catalysis. D250 serves as the catalytic Proton donor. H279 acts as the Proton acceptor in catalysis.

This sequence belongs to the haloalkane dehalogenase family. Type 1 subfamily. As to quaternary structure, monomer.

It carries out the reaction 1-haloalkane + H2O = a halide anion + a primary alcohol + H(+). In terms of biological role, catalyzes hydrolytic cleavage of carbon-halogen bonds in halogenated aliphatic compounds, leading to the formation of the corresponding primary alcohols, halide ions and protons. In Phenylobacterium zucineum (strain HLK1), this protein is Haloalkane dehalogenase.